A 708-amino-acid polypeptide reads, in one-letter code: MATTSLDLAKVRNIGIMAHIDAGKTTTTERILFYTGVSYKIGEVHDGAATMDWMEQEQERGITITSAATTCHWPLEDNDYTINIIDTPGHVDFTVEVERSLRVLDGAVTVFDGVAGVEPQSETVWRQADRYGVPRICFVNKLDRTGAEFHRCVDMISDRLGAQPLVMQLPIGAEADFQGVVDLVRMKALVWSADAAKGEMYDVVDIPATHTEAAEEWRGKLVEAVAENDEEVMELFLEGQEPTEEQLYAAIRRVTIASGKSSDTTVTPVFCGTAFKNKGVQPLLDAVVRYLPTPLDVEAIEGHDVKDPEVVVKRKPSEDEPLAALAFKIMSDPHLGKLTFVRVYSGRLVSGTAVLNSVKGRKERIGKIYRMHANKREEIESVGAGDIVAVMGLKQTTTGETLSDDKSPVILESMDFPAPVIQVAIEPKSKGDQEKLGVAIQRLAEEDPSFQVHTNEETGQTIIGGMGELHLEVLVDRMRREFKVEANVGKPQVAYRETIRKTVERVDYTHKKQTGGTGQFAKVQIAIEPIEGGDASYEFVNKVTGGRIPKEYIPSVDAGAQEAMQFGILAGYEMTGVRVTLIDGGYHEVDSSELAFKIAGSQAFKEAARKASPVLLEPMMAVEVTTPEDYMGDVIGDINSRRGQIQAMEERMGARVVKGLVPLSEMFGYVGDLRSKTSGRASYSMQFDSYAEVPRNVAEEIIAKAKGE.

Residues 9–295 (AKVRNIGIMA…AVVRYLPTPL (287 aa)) enclose the tr-type G domain. GTP is bound by residues 18 to 25 (AHIDAGKT), 86 to 90 (DTPGH), and 140 to 143 (NKLD).

It belongs to the TRAFAC class translation factor GTPase superfamily. Classic translation factor GTPase family. EF-G/EF-2 subfamily.

Its subcellular location is the cytoplasm. In terms of biological role, catalyzes the GTP-dependent ribosomal translocation step during translation elongation. During this step, the ribosome changes from the pre-translocational (PRE) to the post-translocational (POST) state as the newly formed A-site-bound peptidyl-tRNA and P-site-bound deacylated tRNA move to the P and E sites, respectively. Catalyzes the coordinated movement of the two tRNA molecules, the mRNA and conformational changes in the ribosome. The polypeptide is Elongation factor G 1 (fusA) (Streptomyces coelicolor (strain ATCC BAA-471 / A3(2) / M145)).